Consider the following 258-residue polypeptide: UPF0246 protein YaaA (258 aa).

Belongs to the UPF0246 family.

This Shigella sonnei (strain Ss046) protein is UPF0246 protein YaaA.